Consider the following 241-residue polypeptide: Glycerol-3-phosphate acyltransferase (241 aa).

Helical transmembrane passes span 3 to 23 (ILYS…LLGS), 63 to 83 (IVFA…SAIV), 97 to 117 (YISP…PAYY), 131 to 151 (LIIS…LLVV), 156 to 176 (IVSL…WMPW), and 198 to 218 (LVNY…LVLV).

Belongs to the PlsY family. In terms of assembly, probably interacts with PlsX.

The protein localises to the cell membrane. The catalysed reaction is an acyl phosphate + sn-glycerol 3-phosphate = a 1-acyl-sn-glycero-3-phosphate + phosphate. It functions in the pathway lipid metabolism; phospholipid metabolism. Its function is as follows. Catalyzes the transfer of an acyl group from acyl-phosphate (acyl-PO(4)) to glycerol-3-phosphate (G3P) to form lysophosphatidic acid (LPA). This enzyme utilizes acyl-phosphate as fatty acyl donor, but not acyl-CoA or acyl-ACP. In Mycoplasmopsis agalactiae (strain NCTC 10123 / CIP 59.7 / PG2) (Mycoplasma agalactiae), this protein is Glycerol-3-phosphate acyltransferase.